Reading from the N-terminus, the 150-residue chain is Putative esterase SSO1253 (150 aa).

The protein belongs to the thioesterase PaaI family.

The polypeptide is Putative esterase SSO1253 (Saccharolobus solfataricus (strain ATCC 35092 / DSM 1617 / JCM 11322 / P2) (Sulfolobus solfataricus)).